The chain runs to 449 residues: Exodeoxyribonuclease 7 large subunit (449 aa).

It belongs to the XseA family. Heterooligomer composed of large and small subunits.

Its subcellular location is the cytoplasm. The catalysed reaction is Exonucleolytic cleavage in either 5'- to 3'- or 3'- to 5'-direction to yield nucleoside 5'-phosphates.. Functionally, bidirectionally degrades single-stranded DNA into large acid-insoluble oligonucleotides, which are then degraded further into small acid-soluble oligonucleotides. This Salmonella paratyphi A (strain ATCC 9150 / SARB42) protein is Exodeoxyribonuclease 7 large subunit.